The sequence spans 289 residues: RNA exonuclease 4 (289 aa).

Positions Met1–Lys24 are enriched in polar residues. A disordered region spans residues Met1–Lys34. Positions Gln25–Lys34 are enriched in basic residues. Residues Tyr121–Tyr273 enclose the Exonuclease domain.

This sequence belongs to the REXO4 family.

The protein localises to the nucleus. In terms of biological role, exoribonuclease involved in ribosome biosynthesis. Involved in the processing of ITS1, the internal transcribed spacer localized between the 18S and 5.8S rRNAs. This is RNA exonuclease 4 (REX4) from Saccharomyces cerevisiae (strain ATCC 204508 / S288c) (Baker's yeast).